The sequence spans 2446 residues: Transcription factor HIVEP2 (2446 aa).

A disordered region spans residues 1–93 (MDTGDTALGQ…YPPHRPSPYS (93 aa)). Over residues 17 to 28 (GETDKASGRWRQ) the composition is skewed to basic and acidic residues. 2 C2H2-type zinc fingers span residues 189–211 (YICPYCSRACAKPSVLKKHIRSH) and 217–239 (YPCIPCGFSFKTKSNLYKHRKSH). Disordered regions lie at residues 272–303 (HSDGEQSTDTDEESSLFAEASDKMSPGPPIPL), 340–416 (ESSQ…PPNT), 543–563 (SNSVPTSSATNLTIPPSLRGS), and 751–985 (SHGH…SFER). Polar residues-rich tracts occupy residues 381 to 416 (SEPSLNLLSPHSKGSTDSGYFSRSESAEQQISPPNT) and 543 to 556 (SNSVPTSSATNLTI). A compositionally biased stretch (basic and acidic residues) spans 751–760 (SHGHTERFDP). Over residues 766 to 777 (QPGSPSLVSEES) the composition is skewed to polar residues. Positions 782-791 (DSDKMSDLGG) are enriched in basic and acidic residues. Residues 800–812 (SVIQHTNSLSRPN) are compositionally biased toward polar residues. A Phosphoserine modification is found at Ser-819. Over residues 863-878 (PSPSQQVQQQSYHTQP) the composition is skewed to low complexity. Residues 892–916 (RVTEEPDKPEKEKEAQSKEPEKPVE) show a composition bias toward basic and acidic residues. Positions 937–943 (PKKKRLR) match the Nuclear localization signal motif. Phosphoserine is present on residues Ser-950, Ser-955, Ser-1048, Ser-1443, and Ser-1447. A compositionally biased stretch (low complexity) spans 952–982 (GESSFESTGTGLSRSPSQESNLSHSSSFSMS). Residues 1485–1603 (KDLSRPQKPQ…LEEEGKGHKR (119 aa)) are disordered. Composition is skewed to low complexity over residues 1510-1533 (SGSSSFSSLSPSSSQDYPSVSPSS) and 1576-1586 (SDMSMSPQSSS). C2H2-type zinc fingers lie at residues 1799–1821 (YICEECGIRCKKPSMLKKHIRTH) and 1827–1851 (YVCKLCNFAFKTKGNLTKHMKSKAH). Disordered regions lie at residues 1882–1951 (AAEK…VNVG) and 2024–2129 (EECM…RRDL). Acidic residues predominate over residues 1899 to 1925 (DAEESDGEDGDDNDDDDEDEDDFDDQG). Residues 2029-2053 (PSEPSSSPRDFSPSSHHSSPGYDSS) are compositionally biased toward low complexity. Repeat copies occupy residues 2053-2056 (SPCR), 2059-2062 (SPKR), 2071-2074 (SPRR), 2083-2086 (SPMR), 2089-2092 (SPRK), 2106-2109 (SPRR), 2112-2115 (SPRR), 2118-2121 (SPGK), 2130-2133 (SPRR), and 2145-2148 (SPRR). Residues 2053-2148 (SPCRDNSPKR…TTIRAPSPRR (96 aa)) form a 10 X 4 AA tandem repeats of S-P-[RGMKC]-[RK] region. Residues 2078-2107 (PRRDLSPMRHLSPRKEAALRREMSQRDVSP) show a composition bias toward basic and acidic residues. Ser-2118 is modified (phosphoserine). Disordered stretches follow at residues 2242–2325 (PALS…QEEN), 2371–2403 (HFSRPEPGQPCTSATHPDLHDGEKDNFGTSQTP), and 2423–2446 (HSSKELSSSTEESKDPSSEKSQLH). 2 positions are modified to phosphoserine: Ser-2297 and Ser-2301. Residues 2307-2317 (KQSTSEDSLNA) are compositionally biased toward polar residues. Residues 2387 to 2396 (PDLHDGEKDN) show a composition bias toward basic and acidic residues. Phosphoserine is present on residues Ser-2429 and Ser-2431. Residues 2433-2446 (EESKDPSSEKSQLH) are compositionally biased toward basic and acidic residues.

In terms of assembly, interacts with TCF4. Expressed in brain and skeletal muscle.

The protein localises to the nucleus. Its function is as follows. This protein specifically binds to the DNA sequence 5'-GGGACTTTCC-3' which is found in the enhancer elements of numerous viral promoters such as those of SV40, CMV, or HIV1. In addition, related sequences are found in the enhancer elements of a number of cellular promoters, including those of the class I MHC, interleukin-2 receptor, somatostatin receptor II, and interferon-beta genes. It may act in T-cell activation. This chain is Transcription factor HIVEP2 (HIVEP2), found in Homo sapiens (Human).